Here is a 329-residue protein sequence, read N- to C-terminus: MNETAADRVAPRGFTELPDLAVRSLGGAVIWADDEFFAEKENLIVPEAPEFRPATYGHRGQVYDGWETRRHRGLPGDDAAVVRLGVPGVIHGVVVDTSWFTGNYPPAISLSALAIDGYPPAADIAARTDWVPLLDRVPVRGDARNPFPIPSRDRWTHVRLTMHPDGGIARLRVHGEGRPDPALLGLGPVDLAALENGALVLDCSDRFYGSPHQLLHPGNARRMGDGWETARRRDDGNDWVRIRLAGPGLIRLAELDTSYFLGNSPAAARLTGRTTDGTEVELLPRTPLQPDTRHRFPTAAVAASVEEVRLDIYPDGGLARVRLFGELGG.

Belongs to the allantoicase family.

The catalysed reaction is allantoate + H2O = (S)-ureidoglycolate + urea. The protein operates within nitrogen metabolism; (S)-allantoin degradation; (S)-ureidoglycolate from allantoate (aminidohydrolase route): step 1/1. This Nocardia farcinica (strain IFM 10152) protein is Probable allantoicase.